Here is a 115-residue protein sequence, read N- to C-terminus: Small ribosomal subunit protein bS18c (115 aa).

The disordered stretch occupies residues 91-115; that stretch reads TNALKARTQNKDQKKEKFQINKKKK. Residues 99 to 109 show a composition bias toward basic and acidic residues; it reads QNKDQKKEKFQ.

It belongs to the bacterial ribosomal protein bS18 family. As to quaternary structure, part of the 30S ribosomal subunit.

The protein localises to the plastid. It localises to the chloroplast. The polypeptide is Small ribosomal subunit protein bS18c (Ipomoea purpurea (Common morning glory)).